Reading from the N-terminus, the 580-residue chain is MSNKPFFYQDPFPLKKDDTEYYLLTSEHVSVAEFEGQEILKVAPEALTLLARQAFHDASFMLRPAHQQQVADILRDPQASENDKYVALQFLRNSDIAAKGVLPTCQDTGTAIIVGKKGQRVWTGGGDEAALARGVYNTYIEDNLRYSQNAALDMYKEVNTGTNLPAQIDLYSVDGDEYKFLCIAKGGGSANKTYLYQETKALLTPGKLKNYLVDKMRTLGTAACPPYHIAFVIGGTSAEANLKTVKLASAKYYDALPTEGNEHGQAFRDIELEKELLLEAQNLGLGAQFGGKYFAHDIRVIRLPRHGASCPVGMGVSCSADRNIKAKINRDGIWIEKLERNPGKYIPEALRQAGEGEAVRVDLNRPMSEILQQLSQYPVSTRLSLNGTIIVGRDIAHAKLKERMDRGEGLPQYIKDHPIYYAGPAKTPEGYASGSLGPTTAGRMDSYVDQLQSQGGSMIMLAKGNRSQQVTDACKKHGGFYLGSIGGPAAVLAQGSIKRLECVEYPELGMEAIWKIEVEDFPAFILVDDKGNDFFQQIQSSQCGAALSNVAALRGGNMIRYFAGERRKRLIRSTPLCCYR.

Residues C105, C224, and C318 each coordinate [4Fe-4S] cluster.

The protein belongs to the class-I fumarase family. Homodimer. Requires [4Fe-4S] cluster as cofactor.

It catalyses the reaction (S)-malate = fumarate + H2O. The enzyme catalyses oxaloacetate = enol-oxaloacetate. The protein operates within carbohydrate metabolism; tricarboxylic acid cycle; (S)-malate from fumarate: step 1/1. Its function is as follows. Catalyzes the reversible hydration of fumarate to (S)-malate. Functions as an aerobic enzyme in the direction of malate formation as part of the citric acid cycle. Accounts for about 80% of the fumarase activity when the bacteria grow aerobically. To a lesser extent, also displays D-tartrate dehydratase activity in vitro, but is not able to convert (R)-malate, L-tartrate or meso-tartrate. Can also catalyze the isomerization of enol- to keto-oxaloacetate. The sequence is that of Fumarate hydratase class I, aerobic from Salmonella typhimurium (strain LT2 / SGSC1412 / ATCC 700720).